The chain runs to 1067 residues: DNA-directed RNA polymerase subunit beta (1067 aa).

This sequence belongs to the RNA polymerase beta chain family. As to quaternary structure, in plastids the minimal PEP RNA polymerase catalytic core is composed of four subunits: alpha, beta, beta', and beta''. When a (nuclear-encoded) sigma factor is associated with the core the holoenzyme is formed, which can initiate transcription.

It is found in the plastid. It localises to the chloroplast. The catalysed reaction is RNA(n) + a ribonucleoside 5'-triphosphate = RNA(n+1) + diphosphate. Functionally, DNA-dependent RNA polymerase catalyzes the transcription of DNA into RNA using the four ribonucleoside triphosphates as substrates. The chain is DNA-directed RNA polymerase subunit beta from Ipomoea purpurea (Common morning glory).